A 325-amino-acid chain; its full sequence is Intelectin (325 aa).

Residues 1–23 form the signal peptide; sequence MKYCVLLIMIHLLLVELPQFPEA. Residues 44-266 enclose the Fibrinogen C-terminal domain; sequence IRSSYIGRSC…AAMAICSGVK (223 aa). A disulfide bridge links C53 with C82. The Ca(2+) site is built by H98, E99, N101, G104, G109, D110, D145, E274, E286, and D294. Cystine bridges form between C106/C292 and C262/C277. A carbohydrate-binding positions include 274 to 275 and E286; that span reads EH.

As to expression, expressed at high levels in caudal kidney, liver, and swim bladder. Also expressed in gill, spleen, intestine and head kidney. Not detected in heart.

Its function is as follows. May be involved in innate immune surveillance. May specifically recognize carbohydrate chains of pathogens and bacterial components in a calcium-dependent manner. In vitro binds N-acetylglucosamine residues. The chain is Intelectin from Oncorhynchus mykiss (Rainbow trout).